Reading from the N-terminus, the 274-residue chain is Cytochrome b-c1 complex subunit Rieske, mitochondrial (274 aa).

Residues 79–103 (SHTDVRVPDFSEYRRLEVLDSTKSS) lie on the Mitochondrial matrix side of the membrane. A helical transmembrane segment spans residues 104 to 140 (RESSEARKGFSYLVTGVTTVGVAYAAKNVVTQFVSSM). The Mitochondrial intermembrane segment spans residues 141–274 (SASADVLALA…FTSDDMVIVG (134 aa)). Positions 187 to 272 (EAAVELSQLR…YEFTSDDMVI (86 aa)) constitute a Rieske domain. The [2Fe-2S] cluster site is built by C217, H219, C236, H239, and S241. A disulfide bridge connects residues C222 and C238.

It belongs to the Rieske iron-sulfur protein family. Component of the ubiquinol-cytochrome c oxidoreductase (cytochrome b-c1 complex, complex III, CIII), a multisubunit enzyme composed of 11 subunits. The complex is composed of 3 respiratory subunits cytochrome b, cytochrome c1 and Rieske protein UQCRFS1, 2 core protein subunits UQCRC1/QCR1 and UQCRC2/QCR2, and 6 low-molecular weight protein subunits UQCRH/QCR6, UQCRB/QCR7, UQCRQ/QCR8, UQCR10/QCR9, UQCR11/QCR10 and subunit 9, the cleavage product of Rieske protein UQCRFS1. The complex exists as an obligatory dimer and forms supercomplexes (SCs) in the inner mitochondrial membrane with NADH-ubiquinone oxidoreductase (complex I, CI) and cytochrome c oxidase (complex IV, CIV), resulting in different assemblies (supercomplex SCI(1)III(2)IV(1) and megacomplex MCI(2)III(2)IV(2)). Incorporation of the Rieske protein UQCRFS1 is the penultimate step in complex III assembly. Interacts with TTC19, which is involved in the clearance of UQCRFS1 fragments. In terms of assembly, component of the ubiquinol-cytochrome c oxidoreductase (cytochrome b-c1 complex, complex III, CIII). Subunit 9 corresponds to the mitochondrial targeting sequence (MTS) of Rieske protein UQCRFS1. It is retained after processing and incorporated inside complex III, where it remains bound to the complex and localizes between the 2 core subunits UQCRC1/QCR1 and UQCRC2/QCR2. The cofactor is [2Fe-2S] cluster. Post-translationally, proteolytic processing is necessary for the correct insertion of UQCRFS1 in the complex III dimer. Several fragments are generated during UQCRFS1 insertion, most probably due to the endogenous matrix-processing peptidase (MPP) activity of the 2 core protein subunits UQCRC1/QCR1 and UQCRC2/QCR2, which are homologous to the 2 mitochondrial-processing peptidase (MPP) subunits beta-MPP and alpha-MPP respectively. The action of the protease is also necessary for the clearance of the UQCRFS1 fragments.

The protein resides in the mitochondrion inner membrane. The catalysed reaction is a quinol + 2 Fe(III)-[cytochrome c](out) = a quinone + 2 Fe(II)-[cytochrome c](out) + 2 H(+)(out). Functionally, component of the ubiquinol-cytochrome c oxidoreductase, a multisubunit transmembrane complex that is part of the mitochondrial electron transport chain which drives oxidative phosphorylation. The respiratory chain contains 3 multisubunit complexes succinate dehydrogenase (complex II, CII), ubiquinol-cytochrome c oxidoreductase (cytochrome b-c1 complex, complex III, CIII) and cytochrome c oxidase (complex IV, CIV), that cooperate to transfer electrons derived from NADH and succinate to molecular oxygen, creating an electrochemical gradient over the inner membrane that drives transmembrane transport and the ATP synthase. The cytochrome b-c1 complex catalyzes electron transfer from ubiquinol to cytochrome c, linking this redox reaction to translocation of protons across the mitochondrial inner membrane, with protons being carried across the membrane as hydrogens on the quinol. In the process called Q cycle, 2 protons are consumed from the matrix, 4 protons are released into the intermembrane space and 2 electrons are passed to cytochrome c. The Rieske protein is a catalytic core subunit containing a [2Fe-2S] iron-sulfur cluster. It cycles between 2 conformational states during catalysis to transfer electrons from the quinol bound in the Q(0) site in cytochrome b to cytochrome c1. Incorporation of UQCRFS1 is the penultimate step in complex III assembly. In terms of biological role, component of the ubiquinol-cytochrome c oxidoreductase (cytochrome b-c1 complex, complex III, CIII). UQCRFS1 undergoes proteolytic processing once it is incorporated in the complex III dimer. One of the fragments, called subunit 9, corresponds to its mitochondrial targeting sequence (MTS). The proteolytic processing is necessary for the correct insertion of UQCRFS1 in the complex III dimer, but the persistence of UQCRFS1-derived fragments may prevent newly imported UQCRFS1 to be processed and assembled into complex III and is detrimental for the complex III structure and function. The chain is Cytochrome b-c1 complex subunit Rieske, mitochondrial (UQCRFS1) from Pongo pygmaeus (Bornean orangutan).